Reading from the N-terminus, the 379-residue chain is Alcohol dehydrogenase 1 (379 aa).

8 residues coordinate Zn(2+): cysteine 47, threonine 49, histidine 69, cysteine 99, cysteine 102, cysteine 105, cysteine 113, and cysteine 177. An alcohol contacts are provided by threonine 49 and histidine 69. Residue threonine 49 participates in NAD(+) binding. Residues 202-207, aspartate 226, arginine 231, threonine 272, valine 295, 295-297, phenylalanine 322, and arginine 372 contribute to the NAD(+) site; these read GLGAVG and VGV.

It belongs to the zinc-containing alcohol dehydrogenase family. In terms of assembly, homodimer. Zn(2+) serves as cofactor.

The protein resides in the cytoplasm. It carries out the reaction a primary alcohol + NAD(+) = an aldehyde + NADH + H(+). It catalyses the reaction a secondary alcohol + NAD(+) = a ketone + NADH + H(+). This Oryza sativa subsp. indica (Rice) protein is Alcohol dehydrogenase 1 (ADH1).